The sequence spans 367 residues: Aminomethyltransferase (367 aa).

Belongs to the GcvT family. In terms of assembly, the glycine cleavage system is composed of four proteins: P, T, L and H.

It carries out the reaction N(6)-[(R)-S(8)-aminomethyldihydrolipoyl]-L-lysyl-[protein] + (6S)-5,6,7,8-tetrahydrofolate = N(6)-[(R)-dihydrolipoyl]-L-lysyl-[protein] + (6R)-5,10-methylene-5,6,7,8-tetrahydrofolate + NH4(+). The glycine cleavage system catalyzes the degradation of glycine. The protein is Aminomethyltransferase of Lysinibacillus sphaericus (strain C3-41).